A 1293-amino-acid chain; its full sequence is DNA repair protein complementing XP-C cells homolog (1293 aa).

Disordered stretches follow at residues M1–K199, E217–T239, Q255–G341, D514–L640, and L658–K919. A compositionally biased stretch (basic and acidic residues) spans D18–E30. S31, S32, and S37 each carry phosphoserine. The span at S31 to Q43 shows a compositional bias: acidic residues. The span at S51–G60 shows a compositional bias: low complexity. 2 stretches are compositionally biased toward polar residues: residues F101 to R130 and R226 to A238. Positions S288–T301 are enriched in basic residues. Residues D313 to E335 are compositionally biased toward acidic residues. Over residues L520–P578 the composition is skewed to basic and acidic residues. Phosphoserine occurs at positions 533 and 537. Residues S580–T594 are compositionally biased toward low complexity. Residues V598–S612 show a composition bias toward basic and acidic residues. A compositionally biased stretch (low complexity) spans L658–K692. Residues S693–V711 show a composition bias toward basic and acidic residues. The segment covering K720–S737 has biased composition (polar residues). Basic and acidic residues predominate over residues H806 to S818. A phosphoserine mark is found at S908 and S911. 3 short sequence motifs (nuclear localization signal) span residues K922–R938, K1195–K1211, and K1275–Y1291.

The protein belongs to the XPC family. As to quaternary structure, heterodimer.

It localises to the nucleus. Involved in DNA excision repair. May play a part in DNA damage recognition and/or in altering chromatin structure to allow access by damage-processing enzymes. Functionally, involved in nucleotide excision repair of DNA damaged with UV light, bulky adducts, or cross-linking agents. The polypeptide is DNA repair protein complementing XP-C cells homolog (Drosophila melanogaster (Fruit fly)).